Reading from the N-terminus, the 610-residue chain is Elongation factor 4 (610 aa).

The 183-residue stretch at 7–189 (SRIRNFSIIA…AIVQRIPPPK (183 aa)) folds into the tr-type G domain. Residues 19-24 (DHGKST) and 136-139 (NKID) contribute to the GTP site.

This sequence belongs to the TRAFAC class translation factor GTPase superfamily. Classic translation factor GTPase family. LepA subfamily.

The protein localises to the cell inner membrane. It carries out the reaction GTP + H2O = GDP + phosphate + H(+). In terms of biological role, required for accurate and efficient protein synthesis under certain stress conditions. May act as a fidelity factor of the translation reaction, by catalyzing a one-codon backward translocation of tRNAs on improperly translocated ribosomes. Back-translocation proceeds from a post-translocation (POST) complex to a pre-translocation (PRE) complex, thus giving elongation factor G a second chance to translocate the tRNAs correctly. Binds to ribosomes in a GTP-dependent manner. This is Elongation factor 4 from Thermus thermophilus (strain ATCC BAA-163 / DSM 7039 / HB27).